We begin with the raw amino-acid sequence, 351 residues long: Histidine protein kinase SaeS (351 aa).

2 helical membrane passes run 9–29 (IIIG…IAYI) and 40–60 (TLTL…SIFI). Residues 61–114 (NPLIQKIKQFNIKTKQFANGNYASNDKTFNSPKEIYELNQSFNKMASEITQQMN) form the HAMP domain. The Histidine kinase domain maps to 129–348 (NLAHDLKTPL…TMTVTLHKLD (220 aa)). Position 132 is a phosphohistidine; by autocatalysis (histidine 132).

Autophosphorylated.

It localises to the cell membrane. The enzyme catalyses ATP + protein L-histidine = ADP + protein N-phospho-L-histidine.. Its function is as follows. Member of the two-component regulatory system SaeR/SaeS involved in the regulation of staphylococcal virulence factors in a strain-dependent fashion. Probably functions as a membrane-associated protein kinase that upon sensing the appropriate signal, autophosphorylates and in turn activates the cytosolic response regulator SaeR. The protein is Histidine protein kinase SaeS (saeS) of Staphylococcus aureus (strain USA300).